A 191-amino-acid polypeptide reads, in one-letter code: MGQGNSKLSSDDIKKIMSKTNYTSEQVSQILKDYQSVNQDSKGLSLEEFKSFFSIRFKDYDDASILHMFKIFDSDKNGRISFKEFVGALFIITKSPVSDKLSFLFDMFDRDLNGYLDLEESYNILKLALNTSVGLGFDVSQAGSFAEGLLNSMNRNSHGGITKEEFIKKASVNDTFVRMLCLYQSYDTLLY.

Gly-2 carries the N-myristoyl glycine lipid modification. 3 consecutive EF-hand domains span residues 25–59 (EQVS…RFKD), 60–95 (YDDA…ITKS), and 96–131 (PVSD…ALNT). Ca(2+)-binding residues include Asp-73, Asp-75, Asn-77, Arg-79, and Glu-84.

Belongs to the recoverin family.

The chain is Calcium-binding protein L (cbpL) from Dictyostelium discoideum (Social amoeba).